Here is a 181-residue protein sequence, read N- to C-terminus: MLEAVSAVMSLGGMALFAGLGLGYAAKKFHVEADPVVEKLEALLPATNCGMCGHPGCGPYAQAITEGEAINLCTPGGKAVMESIAAMLGVSPAAMDDEGPKVAYIDEEACIGCTACIKVCPVDAIVGANKQSHTVIVAECTSCQLCLEPCPTDCITMQPVPENIYDWTWDKPAGPNSKALH.

Residues 1 to 26 (MLEAVSAVMSLGGMALFAGLGLGYAA) form a hydrophobic region. The 4Fe-4S domain maps to 32-90 (EADPVVEKLEALLPATNCGMCGHPGCGPYAQAITEGEAINLCTPGGKAVMESIAAMLGV). The [4Fe-4S] cluster site is built by Cys49, Cys52, Cys57, Cys73, Cys110, Cys113, Cys116, Cys120, Cys140, Cys143, Cys146, and Cys150. 4Fe-4S ferredoxin-type domains lie at 101–130 (KVAY…GANK) and 131–160 (QSHT…MQPV).

This sequence belongs to the 4Fe4S bacterial-type ferredoxin family. RnfB subfamily. The complex is composed of six subunits: RnfA, RnfB, RnfC, RnfD, RnfE and RnfG. [4Fe-4S] cluster serves as cofactor.

The protein resides in the cell inner membrane. Part of a membrane-bound complex that couples electron transfer with translocation of ions across the membrane. In Magnetococcus marinus (strain ATCC BAA-1437 / JCM 17883 / MC-1), this protein is Ion-translocating oxidoreductase complex subunit B.